Reading from the N-terminus, the 219-residue chain is Interleukin-12 subunit alpha (219 aa).

Positions Met-1–Ala-22 are cleaved as a signal peptide. N-linked (GlcNAc...) asparagine glycosylation is found at Asn-24, Asn-93, and Asn-107. Intrachain disulfides connect Cys-37–Cys-110, Cys-64–Cys-196, and Cys-85–Cys-123.

The protein belongs to the IL-6 superfamily. In terms of assembly, heterodimer with IL12B; disulfide-linked. This heterodimer is known as interleukin IL-12. Heterodimer with EBI3/IL27B; not disulfide-linked. This heterodimer is known as interleukin IL-35. Interacts with NBR1; this interaction promotes IL-12 secretion.

It is found in the secreted. Its function is as follows. Heterodimerizes with IL12B to form the IL-12 cytokine or with EBI3/IL27B to form the IL-35 cytokine. IL-12 is primarily produced by professional antigen-presenting cells (APCs) such as B-cells and dendritic cells (DCs) as well as macrophages and granulocytes and regulates T-cell and natural killer-cell responses, induces the production of interferon-gamma (IFN-gamma), favors the differentiation of T-helper 1 (Th1) cells and is an important link between innate resistance and adaptive immunity. Mechanistically, exerts its biological effects through a receptor composed of IL12R1 and IL12R2 subunits. Binding to the receptor results in the rapid tyrosine phosphorylation of a number of cellular substrates including the JAK family kinases TYK2 and JAK2. In turn, recruited STAT4 gets phosphorylated and translocates to the nucleus where it regulates cytokine/growth factor responsive genes. As part of IL-35, plays essential roles in maintaining the immune homeostasis of the liver microenvironment and also functions as an immune-suppressive cytokine. Mediates biological events through unconventional receptors composed of IL12RB2 and gp130/IL6ST heterodimers or homodimers. Signaling requires the transcription factors STAT1 and STAT4, which form a unique heterodimer that binds to distinct DNA sites. This chain is Interleukin-12 subunit alpha (IL12A), found in Cercocebus atys (Sooty mangabey).